The sequence spans 122 residues: Large ribosomal subunit protein uL14 (122 aa).

Belongs to the universal ribosomal protein uL14 family. Part of the 50S ribosomal subunit. Forms a cluster with proteins L3 and L19. In the 70S ribosome, L14 and L19 interact and together make contacts with the 16S rRNA in bridges B5 and B8.

Its function is as follows. Binds to 23S rRNA. Forms part of two intersubunit bridges in the 70S ribosome. The protein is Large ribosomal subunit protein uL14 of Borreliella burgdorferi (strain ZS7) (Borrelia burgdorferi).